The primary structure comprises 270 residues: Formamidopyrimidine-DNA glycosylase (270 aa).

Proline 2 (schiff-base intermediate with DNA) is an active-site residue. Glutamate 3 (proton donor) is an active-site residue. Catalysis depends on lysine 58, which acts as the Proton donor; for beta-elimination activity. Residues histidine 91, arginine 110, and lysine 151 each coordinate DNA. An FPG-type zinc finger spans residues 236–270 (FVYGRGGQPCKVCGTTLREIKLGQRASVYCPKCQR). Residue arginine 260 is the Proton donor; for delta-elimination activity of the active site.

This sequence belongs to the FPG family. In terms of assembly, monomer. Zn(2+) serves as cofactor.

The catalysed reaction is Hydrolysis of DNA containing ring-opened 7-methylguanine residues, releasing 2,6-diamino-4-hydroxy-5-(N-methyl)formamidopyrimidine.. It catalyses the reaction 2'-deoxyribonucleotide-(2'-deoxyribose 5'-phosphate)-2'-deoxyribonucleotide-DNA = a 3'-end 2'-deoxyribonucleotide-(2,3-dehydro-2,3-deoxyribose 5'-phosphate)-DNA + a 5'-end 5'-phospho-2'-deoxyribonucleoside-DNA + H(+). Its function is as follows. Involved in base excision repair of DNA damaged by oxidation or by mutagenic agents. Acts as a DNA glycosylase that recognizes and removes damaged bases. Has a preference for oxidized purines, such as 7,8-dihydro-8-oxoguanine (8-oxoG). Has AP (apurinic/apyrimidinic) lyase activity and introduces nicks in the DNA strand. Cleaves the DNA backbone by beta-delta elimination to generate a single-strand break at the site of the removed base with both 3'- and 5'-phosphates. This is Formamidopyrimidine-DNA glycosylase from Pseudomonas savastanoi pv. phaseolicola (strain 1448A / Race 6) (Pseudomonas syringae pv. phaseolicola (strain 1448A / Race 6)).